The following is a 275-amino-acid chain: NH(3)-dependent NAD(+) synthetase (275 aa).

47–54 (GISGGQDS) lines the ATP pocket. Position 53 (Asp-53) interacts with Mg(2+). A deamido-NAD(+)-binding site is contributed by Arg-139. Thr-159 contributes to the ATP binding site. Glu-164 is a Mg(2+) binding site. Deamido-NAD(+) is bound by residues Lys-172 and Asp-179. 2 residues coordinate ATP: Lys-188 and Thr-210. 259-260 (HK) serves as a coordination point for deamido-NAD(+).

Belongs to the NAD synthetase family. Homodimer.

The enzyme catalyses deamido-NAD(+) + NH4(+) + ATP = AMP + diphosphate + NAD(+) + H(+). Its pathway is cofactor biosynthesis; NAD(+) biosynthesis; NAD(+) from deamido-NAD(+) (ammonia route): step 1/1. Its function is as follows. Catalyzes the ATP-dependent amidation of deamido-NAD to form NAD. Uses ammonia as a nitrogen source. This Staphylococcus epidermidis (strain ATCC 35984 / DSM 28319 / BCRC 17069 / CCUG 31568 / BM 3577 / RP62A) protein is NH(3)-dependent NAD(+) synthetase.